The following is a 394-amino-acid chain: Ceramide synthase 4 (394 aa).

The Lumenal portion of the chain corresponds to 1-31; sequence MLSSFNEWFWQDRFWLPPNVTWTELEDRDGR. N-linked (GlcNAc...) asparagine glycosylation is present at Asn19. A helical transmembrane segment spans residues 32–52; that stretch reads VYPHPQDLLAALPLALVLLAM. A homeobox-like region spans residues 67–128; that stretch reads WLGVRDQTRR…RRRRNQDRPQ (62 aa). The 202-residue stretch at 131–332 folds into the TLC domain; sequence KKFCEASWRF…ILRMLYSFMK (202 aa). The next 4 membrane-spanning stretches (helical) occupy residues 140 to 160, 179 to 199, 209 to 229, and 260 to 280; these read FLFY…ESWL, LYWW…RLPF, QVIH…ANLL, and VCDA…LVLF. Positions 291–301 match the Last loop motif motif; it reads ESISNRGPFFG. The chain crosses the membrane as a helical span at residues 304 to 324; sequence FFNGLLMLLQLLHVFWSCLIL. The Cytoplasmic segment spans residues 325 to 394; that stretch reads RMLYSFMKKG…RLTNRHTTAT (70 aa). A disordered region spans residues 341–394; that stretch reads RSDVEESDSSEEAAAAQEPLQLKNGAAGGPRPAPTDGPRSRVAGRLTNRHTTAT. Ser342, Ser349, and Ser350 each carry phosphoserine.

Post-translationally, phosphorylated at the C-terminus by CK2. N-glycosylated.

The protein localises to the endoplasmic reticulum membrane. It catalyses the reaction sphinganine + octadecanoyl-CoA = N-(octadecanoyl)-sphinganine + CoA + H(+). The catalysed reaction is eicosanoyl-CoA + sphinganine = N-eicosanoylsphinganine + CoA + H(+). It carries out the reaction docosanoyl-CoA + sphinganine = N-docosanoylsphinganine + CoA + H(+). The enzyme catalyses tetracosanoyl-CoA + sphinganine = N-tetracosanoylsphinganine + CoA + H(+). It catalyses the reaction hexacosanoyl-CoA + sphinganine = N-hexacosanoylsphinganine + CoA + H(+). The catalysed reaction is a fatty acyl-CoA + sphing-4-enine = an N-acylsphing-4-enine + CoA + H(+). It carries out the reaction sphing-4-enine + octadecanoyl-CoA = N-octadecanoylsphing-4-enine + CoA + H(+). The enzyme catalyses hexadecasphinganine + octadecanoyl-CoA = N-octadecanoylhexadecasphinganine + CoA + H(+). It participates in lipid metabolism; sphingolipid metabolism. Functionally, ceramide synthase that catalyzes formation of ceramide from sphinganine and acyl-CoA substrates, with high selectivity toward long and very-long chains (C18:0-C22:0) as acyl donor. The polypeptide is Ceramide synthase 4 (Homo sapiens (Human)).